Consider the following 325-residue polypeptide: Glutarate 2-hydroxylase (325 aa).

Fe cation is bound by residues His-160, Asp-162, and His-292.

The protein belongs to the glutarate hydroxylase family. In terms of assembly, homotetramer. Fe(2+) is required as a cofactor.

It catalyses the reaction glutarate + 2-oxoglutarate + O2 = (S)-2-hydroxyglutarate + succinate + CO2. It functions in the pathway amino-acid degradation. Its function is as follows. Acts as an alpha-ketoglutarate-dependent dioxygenase catalyzing hydroxylation of glutarate (GA) to L-2-hydroxyglutarate (L2HG). Functions in a L-lysine degradation pathway that proceeds via cadaverine, glutarate and L-2-hydroxyglutarate. This is Glutarate 2-hydroxylase from Escherichia coli O17:K52:H18 (strain UMN026 / ExPEC).